The following is a 233-amino-acid chain: 5'-methylthioadenosine/S-adenosylhomocysteine nucleosidase (233 aa).

The active-site Proton acceptor is glutamate 12. Substrate-binding positions include glycine 78, isoleucine 156, and 177–178 (ME). Residue aspartate 201 is the Proton donor of the active site.

This sequence belongs to the PNP/UDP phosphorylase family. MtnN subfamily.

It catalyses the reaction S-adenosyl-L-homocysteine + H2O = S-(5-deoxy-D-ribos-5-yl)-L-homocysteine + adenine. It carries out the reaction S-methyl-5'-thioadenosine + H2O = 5-(methylsulfanyl)-D-ribose + adenine. The catalysed reaction is 5'-deoxyadenosine + H2O = 5-deoxy-D-ribose + adenine. It participates in amino-acid biosynthesis; L-methionine biosynthesis via salvage pathway; S-methyl-5-thio-alpha-D-ribose 1-phosphate from S-methyl-5'-thioadenosine (hydrolase route): step 1/2. Its function is as follows. Catalyzes the irreversible cleavage of the glycosidic bond in both 5'-methylthioadenosine (MTA) and S-adenosylhomocysteine (SAH/AdoHcy) to adenine and the corresponding thioribose, 5'-methylthioribose and S-ribosylhomocysteine, respectively. Also cleaves 5'-deoxyadenosine, a toxic by-product of radical S-adenosylmethionine (SAM) enzymes, into 5-deoxyribose and adenine. The sequence is that of 5'-methylthioadenosine/S-adenosylhomocysteine nucleosidase from Listeria monocytogenes serovar 1/2a (strain ATCC BAA-679 / EGD-e).